Consider the following 512-residue polypeptide: Flavonoid 3'-monooxygenase (512 aa).

The chain crosses the membrane as a helical span at residues 1 to 21; sequence MEILSLILYTVIFSFLLQFIL. Topologically, residues 22-512 are cytoplasmic; the sequence is RSFFRKRYPL…PRLEAQAYIG (491 aa). C447 serves as a coordination point for heme.

It belongs to the cytochrome P450 family. Heme serves as cofactor. High expression in petals and ovaries and to a lower extent in sepals, pedicels, anthers and stems. Not detected in leaves, style or roots.

It is found in the endoplasmic reticulum membrane. The catalysed reaction is a 3'-unsubstituted flavone + reduced [NADPH--hemoprotein reductase] + O2 = a 3'-hydroxyflavone + oxidized [NADPH--hemoprotein reductase] + H2O + H(+). The protein operates within secondary metabolite biosynthesis; flavonoid biosynthesis. Its function is as follows. Catalyzes the 3'-hydroxylation of the flavonoid B-ring to the 3',4'-hydroxylated state. Convert naringenin to eriodictyol and dihydrokaempferol to dihydroquercetin. This Petunia hybrida (Petunia) protein is Flavonoid 3'-monooxygenase (CYP75B2).